We begin with the raw amino-acid sequence, 244 residues long: uncharacterized protein (244 aa).

Transmembrane regions (helical) follow at residues 29 to 49 (WIPW…TQHM) and 139 to 159 (LGMK…ATVI).

This sequence belongs to the FMP10 family.

The protein resides in the mitochondrion membrane. This is an uncharacterized protein from Saccharomyces cerevisiae (strain ATCC 204508 / S288c) (Baker's yeast).